Here is a 980-residue protein sequence, read N- to C-terminus: MADSDDEYDRKRRDKFRGERDSYRPERRDERRPMGGAANSRDEWSERNPFRGSSAAGGGGGGGGARHRPDYSDYRGSGPRARYGSPGREMPPAKRMRPDWGDSEMRSNPRFGYDPYLVQAWNDHYQSLHSAYSHAGHGPSVRETGPAGGGGVSGDTQTQPAMLTLKQFLDTQDENISDSEVMRKYTEYKTDFKRQQLNEFFVAHKDEEWFKNKYHPEDSVRRSEEQRGFLKRRTEVFLELLENGTIGSVKVDSSQADALVRVLDTCVIKLEGGTDEDLKILDEKPKDPPIVYERKSETTESAVVAKREPESPKTEKDDDLPGASSPQHKSLRPVNLDEENWDEDEPMEVHPQTGKDGEKSDDRRSKEPEDEESVKSDNEKKLKKKKIKKRKRNSSDDDSSSSSSSDSDTESDDEKVKAKYDVEEGLRADQKAEALKDKEEAATAAKEKLLAPESPQPEDVVDPKEALEIKSEASEESKQDKTEQPVGQTERPTTDNPAEKNGEEEGAKAEDKPEAGTQESTANEVTETIDLDKVKDGPHPRALHRTSSIFLRNLAPSITKAEIEAICKRFSGYLRVAIADPLVERRWYRRGWITFTRDVNIKEICWSLNNQRLRDCEMGAIVNRDLSRRVRPANGITAHKQIVRADIKLCAKIAMNLDDRFKLWCDSNRSDAEDAEKKAGQEATNGSGASSSPSYGFNSKNPVLQNITDYLIEEASAEEEELLGLAGDNKDGDGEPIERDESLISVLDRLVLYLRIVHSVDYYNHCEYPYEDEMPNRCGIIHARGPAPMRVTSNDVQEYIKAYDGKLQQFLTKTVQLSDEEIKELGAKNPETEVEKFVQANTQELAKDKWLCPLSGKKFKGPEFIRKHIFNKHEEKVEEVRKEVQYFNNYLRDPKRPQLPEHPGSSKRTESESGRGSGYRPPMYPPFSAMPYGFAPPMMGGGGRGGRNFPPVRREMPLEHQRRIIGYHDLDAPINSDMFD.

5 disordered regions span residues 1–104, 133–155, 290–540, 675–697, and 889–922; these read MADS…GDSE, SHAG…VSGD, IVYE…GPHP, AEKK…SYGF, and NYLR…YRPP. Basic and acidic residues-rich tracts occupy residues 8–33 and 40–49; these read YDRK…ERRP and SRDEWSERNP. Gly residues predominate over residues 55–64; sequence AAGGGGGGGG. Phosphotyrosine is present on tyrosine 83. Serine 85 is modified (phosphoserine). A compositionally biased stretch (basic and acidic residues) spans 305 to 316; that stretch reads AKREPESPKTEK. Position 311 is a phosphoserine (serine 311). Positions 336–346 are enriched in acidic residues; sequence LDEENWDEDEP. Residues 353–380 show a composition bias toward basic and acidic residues; sequence TGKDGEKSDDRRSKEPEDEESVKSDNEK. Residues 381–392 are compositionally biased toward basic residues; the sequence is KLKKKKIKKRKR. The segment covering 414–450 has biased composition (basic and acidic residues); the sequence is EKVKAKYDVEEGLRADQKAEALKDKEEAATAAKEKLL. Residue serine 454 is modified to Phosphoserine. The span at 461–483 shows a compositional bias: basic and acidic residues; it reads VDPKEALEIKSEASEESKQDKTE. The span at 485–495 shows a compositional bias: polar residues; the sequence is PVGQTERPTTD. Positions 497–514 are enriched in basic and acidic residues; sequence PAEKNGEEEGAKAEDKPE. Over residues 517 to 526 the composition is skewed to polar residues; it reads TQESTANEVT. The segment covering 530 to 539 has biased composition (basic and acidic residues); sequence DLDKVKDGPH. Positions 682 to 697 are enriched in polar residues; that stretch reads EATNGSGASSSPSYGF.

Belongs to the ARS2 family. In terms of assembly, interacts with cbp20, Dcr-2 and pasha.

It is found in the nucleus. Acts as a mediator between the cap-binding complex (CBC) and RNA-mediated gene silencing (RNAi). Involved in innate immunity via the short interfering RNAs (siRNAs) processing machinery by restricting the viral RNA production. Also involved microRNA (miRNA)-mediated silencing by contributing to the stability and delivery of primary miRNA transcripts to the primary miRNA processing complex containing drosha and pasha. The chain is Serrate RNA effector molecule homolog (Ars2) from Drosophila mojavensis (Fruit fly).